Reading from the N-terminus, the 461-residue chain is Bifunctional protein HldE (461 aa).

The ribokinase stretch occupies residues 1 to 312 (MLEFLSQQKP…IRSFKSMSFE (312 aa)). An ATP-binding site is contributed by 191–194 (NKKE). Aspartate 259 is a catalytic residue. Residues 334–461 (FTNGCFDIVH…KIIEKIKDKK (128 aa)) are cytidylyltransferase.

The protein in the N-terminal section; belongs to the carbohydrate kinase PfkB family. This sequence in the C-terminal section; belongs to the cytidylyltransferase family. Homodimer.

The enzyme catalyses D-glycero-beta-D-manno-heptose 7-phosphate + ATP = D-glycero-beta-D-manno-heptose 1,7-bisphosphate + ADP + H(+). The catalysed reaction is D-glycero-beta-D-manno-heptose 1-phosphate + ATP + H(+) = ADP-D-glycero-beta-D-manno-heptose + diphosphate. It participates in nucleotide-sugar biosynthesis; ADP-L-glycero-beta-D-manno-heptose biosynthesis; ADP-L-glycero-beta-D-manno-heptose from D-glycero-beta-D-manno-heptose 7-phosphate: step 1/4. The protein operates within nucleotide-sugar biosynthesis; ADP-L-glycero-beta-D-manno-heptose biosynthesis; ADP-L-glycero-beta-D-manno-heptose from D-glycero-beta-D-manno-heptose 7-phosphate: step 3/4. Catalyzes the phosphorylation of D-glycero-D-manno-heptose 7-phosphate at the C-1 position to selectively form D-glycero-beta-D-manno-heptose-1,7-bisphosphate. In terms of biological role, catalyzes the ADP transfer from ATP to D-glycero-beta-D-manno-heptose 1-phosphate, yielding ADP-D-glycero-beta-D-manno-heptose. This is Bifunctional protein HldE from Campylobacter jejuni (strain RM1221).